The sequence spans 315 residues: Methionyl-tRNA formyltransferase (315 aa).

Residue 113-116 (SILP) coordinates (6S)-5,6,7,8-tetrahydrofolate.

Belongs to the Fmt family.

The enzyme catalyses L-methionyl-tRNA(fMet) + (6R)-10-formyltetrahydrofolate = N-formyl-L-methionyl-tRNA(fMet) + (6S)-5,6,7,8-tetrahydrofolate + H(+). In terms of biological role, attaches a formyl group to the free amino group of methionyl-tRNA(fMet). The formyl group appears to play a dual role in the initiator identity of N-formylmethionyl-tRNA by promoting its recognition by IF2 and preventing the misappropriation of this tRNA by the elongation apparatus. In Vibrio vulnificus (strain YJ016), this protein is Methionyl-tRNA formyltransferase.